The primary structure comprises 209 residues: Large ribosomal subunit protein uL3c (209 aa).

The tract at residues 132-154 is disordered; the sequence is PMSHGSKNHRLPGSIGAGSTPGR.

This sequence belongs to the universal ribosomal protein uL3 family. As to quaternary structure, part of the 50S ribosomal subunit.

It is found in the plastid. The protein resides in the cyanelle. Its function is as follows. One of the primary rRNA binding proteins, it binds directly near the 3'-end of the 23S rRNA, where it nucleates assembly of the 50S subunit. This chain is Large ribosomal subunit protein uL3c (rpl3), found in Cyanophora paradoxa.